We begin with the raw amino-acid sequence, 440 residues long: Transposon Ty1-BL Gag polyprotein (440 aa).

Polar residues-rich tracts occupy residues 20–31, 46–55, and 137–168; these read SVTSKEVQTTQD, VSTQANSQQP, and VGTH…TNQH. Disordered stretches follow at residues 20 to 84, 137 to 173, and 350 to 424; these read SVTS…QNGP, VGTH…RPPP, and QQES…TTEP. Residues 299 to 401 form an RNA-binding region; sequence NNGIPINNKV…NSQSRTARAH (103 aa). Basic and acidic residues predominate over residues 363-372; it reads SPSDEKKDSR. Residues 373–411 show a composition bias toward polar residues; it reads TYTNTTKPKSITRNSQKPNNSQSRTARAHNVSTFNNSPG.

As to quaternary structure, homotrimer.

Its subcellular location is the cytoplasm. Its function is as follows. Capsid protein (CA) is the structural component of the virus-like particle (VLP), forming the shell that encapsulates the retrotransposons dimeric RNA genome. The particles are assembled from trimer-clustered units and there are holes in the capsid shells that allow for the diffusion of macromolecules. CA also has nucleocapsid-like chaperone activity, promoting primer tRNA(i)-Met annealing to the multipartite primer-binding site (PBS), dimerization of Ty1 RNA and initiation of reverse transcription. The chain is Transposon Ty1-BL Gag polyprotein (TY1A-BL) from Saccharomyces cerevisiae (strain ATCC 204508 / S288c) (Baker's yeast).